The sequence spans 245 residues: 1-(5-phosphoribosyl)-5-[(5-phosphoribosylamino)methylideneamino] imidazole-4-carboxamide isomerase (245 aa).

Residue Asp-7 is the Proton acceptor of the active site. Asp-129 serves as the catalytic Proton donor.

Belongs to the HisA/HisF family.

It localises to the cytoplasm. The enzyme catalyses 1-(5-phospho-beta-D-ribosyl)-5-[(5-phospho-beta-D-ribosylamino)methylideneamino]imidazole-4-carboxamide = 5-[(5-phospho-1-deoxy-D-ribulos-1-ylimino)methylamino]-1-(5-phospho-beta-D-ribosyl)imidazole-4-carboxamide. It functions in the pathway amino-acid biosynthesis; L-histidine biosynthesis; L-histidine from 5-phospho-alpha-D-ribose 1-diphosphate: step 4/9. This Escherichia coli (strain SMS-3-5 / SECEC) protein is 1-(5-phosphoribosyl)-5-[(5-phosphoribosylamino)methylideneamino] imidazole-4-carboxamide isomerase.